The primary structure comprises 407 residues: Argininosuccinate synthase (407 aa).

ATP-binding positions include 10–18 and Ala37; that span reads AYSGGLDTS. Residues Tyr88 and Ser93 each contribute to the L-citrulline site. Gly118 lines the ATP pocket. 3 residues coordinate L-aspartate: Thr120, Asn124, and Asp125. An L-citrulline-binding site is contributed by Asn124. 5 residues coordinate L-citrulline: Arg128, Ser179, Ser188, Glu264, and Tyr276.

The protein belongs to the argininosuccinate synthase family. Type 1 subfamily. In terms of assembly, homotetramer.

The protein localises to the cytoplasm. It carries out the reaction L-citrulline + L-aspartate + ATP = 2-(N(omega)-L-arginino)succinate + AMP + diphosphate + H(+). Its pathway is amino-acid biosynthesis; L-arginine biosynthesis; L-arginine from L-ornithine and carbamoyl phosphate: step 2/3. The polypeptide is Argininosuccinate synthase (Jannaschia sp. (strain CCS1)).